The following is a 211-amino-acid chain: MTKSYNYKLTHFVTSAPDIRHLPVDSGIEIAFAGRSNAGKSSALNTLTNQKSLARTSKTPGRTRLINLFEVESGIRLVDLPGYGYAEVPEELKRKWQRALGEYLQMRDSLKGLVVLMDIRHPMKDLDQQMVQWAVDVNIPVLVLLTKADKLASGSRKEQLNQVREAALAFMGDVQVETFSSLKKQGVDKLRQKLDDWFAAIPPAQGSPETE.

One can recognise an EngB-type G domain in the interval 26 to 200 (SGIEIAFAGR…RQKLDDWFAA (175 aa)). Residues 34-41 (GRSNAGKS), 61-65 (GRTRL), 79-82 (DLPG), 146-149 (TKAD), and 179-181 (FSS) each bind GTP. Mg(2+) contacts are provided by S41 and T63.

Belongs to the TRAFAC class TrmE-Era-EngA-EngB-Septin-like GTPase superfamily. EngB GTPase family. Requires Mg(2+) as cofactor.

In terms of biological role, necessary for normal cell division and for the maintenance of normal septation. The protein is Probable GTP-binding protein EngB of Sodalis glossinidius (strain morsitans).